The chain runs to 174 residues: 3-hydroxydecanoyl-[acyl-carrier-protein] dehydratase (174 aa).

His71 is a catalytic residue.

Belongs to the thioester dehydratase family. FabA subfamily. Homodimer.

It is found in the cytoplasm. The enzyme catalyses a (3R)-hydroxyacyl-[ACP] = a (2E)-enoyl-[ACP] + H2O. It catalyses the reaction (3R)-hydroxydecanoyl-[ACP] = (2E)-decenoyl-[ACP] + H2O. The catalysed reaction is (2E)-decenoyl-[ACP] = (3Z)-decenoyl-[ACP]. The protein operates within lipid metabolism; fatty acid biosynthesis. Necessary for the introduction of cis unsaturation into fatty acids. Catalyzes the dehydration of (3R)-3-hydroxydecanoyl-ACP to E-(2)-decenoyl-ACP and then its isomerization to Z-(3)-decenoyl-ACP. Can catalyze the dehydratase reaction for beta-hydroxyacyl-ACPs with saturated chain lengths up to 16:0, being most active on intermediate chain length. In Nitrobacter hamburgensis (strain DSM 10229 / NCIMB 13809 / X14), this protein is 3-hydroxydecanoyl-[acyl-carrier-protein] dehydratase.